The following is a 180-amino-acid chain: Large ribosomal subunit protein uL5 (180 aa).

This sequence belongs to the universal ribosomal protein uL5 family. In terms of assembly, forms a bridge to the 30S subunit in the 70S ribosome. Part of the 50S ribosomal subunit; part of the 5S rRNA/L5/L18/L25 (CTC) subcomplex. Is known to contact the 5S rRNA, 23S rRNA and the P site tRNA.

Functionally, this is one of the proteins that bind and probably mediate the attachment of the 5S RNA into the large ribosomal subunit, where it forms part of the central protuberance. In the 70S ribosome it contacts protein S13 of the 30S subunit (bridge B1b), connecting the 2 subunits; this bridge is implicated in subunit movement. Contacts the P site tRNA; the 5S rRNA and some of its associated proteins might help stabilize positioning of ribosome-bound tRNAs. The chain is Large ribosomal subunit protein uL5 (rplE) from Deinococcus radiodurans (strain ATCC 13939 / DSM 20539 / JCM 16871 / CCUG 27074 / LMG 4051 / NBRC 15346 / NCIMB 9279 / VKM B-1422 / R1).